The chain runs to 240 residues: 14-3-3 protein 3 (240 aa).

Belongs to the 14-3-3 family. Interacts with coactosin. Interacts with ACTO/actophorin.

Its subcellular location is the cytoplasm. The protein localises to the cell projection. It localises to the phagocytic cup. Functionally, adapter protein which is required for phagocytosis and motility, probably by regulating actin cytoskeleton dynamics. During phagocytosis, plays a role in the initiation and/or formation of the phagocytic cup and is involved in the recruitment of the actin binding protein coactosin to the phagocytic cup. The chain is 14-3-3 protein 3 from Entamoeba histolytica (strain ATCC 30459 / HM-1:IMSS / ABRM).